The following is a 357-amino-acid chain: MVRAFKIKVPASSANIGPGYDVLGVGLSLFLELDVTIDSSQAQETNDDPNNCKLSYTKESEGYSTVPLRSDANLITRTALYVLRCNNIRNFPSGTKVHVSNPIPLGRGLGSSGAAVVAGVILGNEVAQLGFSKQRMLDYCLMIERHPDNITAAMMGGFCGSFLRDLTPQEVERREIPLAEVLPEPSGGEDTGLVPPLPPTDIGRHVKYQWNPAIKCIAIIPQFELSTADSRGVLPKAYPTQDLVFNLQRLAVLTTALTMDPPNADLIYPAMQDRVHQPYRKTLIPGLTEILSCVTPSTYPGLLGICLSGAGPTILALATENFEEISQEIINRFAKNGIKCSWKLLEPAYDGASVEQQ.

Residue Lys-133 forms a Glycyl lysine isopeptide (Lys-Gly) (interchain with G-Cter in ubiquitin) linkage.

It belongs to the GHMP kinase family. Homoserine kinase subfamily. As to quaternary structure, homodimer.

It catalyses the reaction L-homoserine + ATP = O-phospho-L-homoserine + ADP + H(+). It functions in the pathway amino-acid biosynthesis; L-threonine biosynthesis; L-threonine from L-aspartate: step 4/5. Its function is as follows. Commits homoserine to the threonine biosynthesis pathway by catalyzing its O-phosphorylation. In Saccharomyces cerevisiae (strain ATCC 204508 / S288c) (Baker's yeast), this protein is Homoserine kinase (THR1).